Here is a 257-residue protein sequence, read N- to C-terminus: Phosphonates import ATP-binding protein PhnC (257 aa).

The ABC transporter domain maps to 4 to 248 (IEFKNVSKVY…IFSEIYGRTI (245 aa)). Position 37-44 (37-44 (GLSGAGKS)) interacts with ATP.

Belongs to the ABC transporter superfamily. Phosphonates importer (TC 3.A.1.9.1) family. The complex is composed of two ATP-binding proteins (PhnC), two transmembrane proteins (PhnE) and a solute-binding protein (PhnD).

It is found in the cell membrane. It catalyses the reaction phosphonate(out) + ATP + H2O = phosphonate(in) + ADP + phosphate + H(+). Functionally, part of the ABC transporter complex PhnCDE involved in phosphonates import. Responsible for energy coupling to the transport system. The chain is Phosphonates import ATP-binding protein PhnC from Staphylococcus aureus (strain bovine RF122 / ET3-1).